The primary structure comprises 513 residues: MEKLEGYSEKQKSRQQYFVYPLLFQEYIYAFAHDYGLKGSEPVEIFGCNNKKFSSLLVKRLIIRMYQQNFRINSVNHPNQDRLLDHSNHFYSEFYSQILSEGFAIVLEIPFSLGELSCPEEKEIPKFQNLQSIHSIFPFLEDKFLHLHYLSHIEIPYPIHFEILVQLLEYRIQDVPSLHLLRFFLNYYSNWNSLITSMKSIFLLKKENKRLFRFLYNSYVSEYEFFLLFLRKQSSCLRLISSGTFLERIHFSMKMEHFGVMYPGFFRKTLWFFMDPLMHYVRYQGKAILASKGTLLLKKKWKSYLVNFSQYFLSFWTQPQRIRLNQLTNSCFDFLGYRSSVPINTFLVRNQMLENFFLIDTRMKKFDTTAPATPLIGSLSKAQFCTGLGHPISKPIWTDLSDWDILDRFGRICRNLFHYHSGSSKKQTLYQLKYILRLSCARTLARKHKSTVRTFMQRLGSVFLEEFFTEEEQVFSLMFAKTTHFSFHGSHSERIWYLDIIRIDDLVNPLILN.

Belongs to the intron maturase 2 family. MatK subfamily.

The protein localises to the plastid. The protein resides in the chloroplast. Functionally, usually encoded in the trnK tRNA gene intron. Probably assists in splicing its own and other chloroplast group II introns. The sequence is that of Maturase K from Sporobolus michauxianus (Prairie cordgrass).